Here is a 138-residue protein sequence, read N- to C-terminus: Acidic phospholipase A2 homolog sistruxin A (138 aa).

Residues 1–37 (MRALWIVAVLLLGVEGSLVEFETLIMKIAGRSGVWYY) form the signal peptide. 7 disulfide bridges follow: cysteine 42-cysteine 131, cysteine 44-cysteine 60, cysteine 59-cysteine 111, cysteine 65-cysteine 138, cysteine 66-cysteine 104, cysteine 73-cysteine 97, and cysteine 91-cysteine 102. A propeptide spanning residues 78–83 (DVYTYR) is cleaved from the precursor. Glutamine 84 carries the pyrrolidone carboxylic acid modification. Residues 119–124 (YNHKYW) constitute a propeptide that is removed on maturation.

It belongs to the phospholipase A2 family. Group II subfamily. D49 sub-subfamily. In terms of assembly, heterodimer of an acidic subunit and a basic chain. The acidic subunit is non-toxic, without enzymatic activity and comprises 3 peptides that are cross-linked by 7 disulfide bridges. The basic subunit is toxic, has phospholipase A2 activity and is composed of a single chain. Expressed by the venom gland.

It localises to the secreted. Functionally, snake venom phospholipase A2 (PLA2) that inhibits neuromuscular transmission by blocking acetylcholine release from the nerve termini. This is Acidic phospholipase A2 homolog sistruxin A from Sistrurus tergeminus (Western massasauga).